We begin with the raw amino-acid sequence, 195 residues long: Thymidine kinase (195 aa).

Residues Ser9 to Ser16 and Asp87 to Gln90 contribute to the ATP site. Glu88 (proton acceptor) is an active-site residue. Zn(2+) is bound by residues Cys145, Cys147, Cys182, and His185.

It belongs to the thymidine kinase family. Homotetramer.

The protein resides in the cytoplasm. The catalysed reaction is thymidine + ATP = dTMP + ADP + H(+). This Jannaschia sp. (strain CCS1) protein is Thymidine kinase.